Reading from the N-terminus, the 683-residue chain is Glycine--tRNA ligase beta subunit (683 aa).

The protein belongs to the class-II aminoacyl-tRNA synthetase family. As to quaternary structure, tetramer of two alpha and two beta subunits.

Its subcellular location is the cytoplasm. The enzyme catalyses tRNA(Gly) + glycine + ATP = glycyl-tRNA(Gly) + AMP + diphosphate. This Pseudomonas putida (strain GB-1) protein is Glycine--tRNA ligase beta subunit.